Here is a 302-residue protein sequence, read N- to C-terminus: L-threonate dehydrogenase (302 aa).

Residues 7 to 35 (FHVG…TWGA) and threonine 102 each bind NAD(+). Residue lysine 178 is part of the active site. Residue lysine 246 participates in NAD(+) binding.

This sequence belongs to the HIBADH-related family. L-threonate dehydrogenase subfamily.

It catalyses the reaction L-threonate + NAD(+) = 2-dehydro-L-erythronate + NADH + H(+). Its function is as follows. Catalyzes oxidation of L-threonate to 2-oxo-tetronate. Can use either NAD(+) or NADP(+) as cosubstrate, with a preference for NAD(+). The sequence is that of L-threonate dehydrogenase from Escherichia coli (strain K12).